The primary structure comprises 418 residues: Tyrosine--tRNA ligase (418 aa).

The short motif at 42-51 (PTSPDLHLGH) is the 'HIGH' region element. Residues 226–230 (KMSKS) carry the 'KMSKS' region motif. Lysine 229 contributes to the ATP binding site. The S4 RNA-binding domain maps to 339-400 (VRLVALLTKS…GKRNFIKVRL (62 aa)).

The protein belongs to the class-I aminoacyl-tRNA synthetase family. TyrS type 2 subfamily. Homodimer.

The protein resides in the cytoplasm. It carries out the reaction tRNA(Tyr) + L-tyrosine + ATP = L-tyrosyl-tRNA(Tyr) + AMP + diphosphate + H(+). Its function is as follows. Catalyzes the attachment of tyrosine to tRNA(Tyr) in a two-step reaction: tyrosine is first activated by ATP to form Tyr-AMP and then transferred to the acceptor end of tRNA(Tyr). This chain is Tyrosine--tRNA ligase, found in Xylella fastidiosa (strain Temecula1 / ATCC 700964).